A 510-amino-acid polypeptide reads, in one-letter code: GMP synthase [glutamine-hydrolyzing] (510 aa).

The region spanning 5 to 195 is the Glutamine amidotransferase type-1 domain; sequence LVLVIDFGGQ…LFKICGLKED (191 aa). The active-site Nucleophile is Cys82. Residues His169 and Glu171 contribute to the active site. The 190-residue stretch at 196-385 folds into the GMPS ATP-PPase domain; sequence WSMSSFAKEK…LGIPHKLVWR (190 aa). 223-229 is an ATP binding site; the sequence is SGGVDSS.

Homodimer.

The catalysed reaction is XMP + L-glutamine + ATP + H2O = GMP + L-glutamate + AMP + diphosphate + 2 H(+). It participates in purine metabolism; GMP biosynthesis; GMP from XMP (L-Gln route): step 1/1. Catalyzes the synthesis of GMP from XMP. This Clostridium acetobutylicum (strain ATCC 824 / DSM 792 / JCM 1419 / IAM 19013 / LMG 5710 / NBRC 13948 / NRRL B-527 / VKM B-1787 / 2291 / W) protein is GMP synthase [glutamine-hydrolyzing].